We begin with the raw amino-acid sequence, 886 residues long: Alanine--tRNA ligase (886 aa).

Zn(2+)-binding residues include His-564, His-568, Cys-676, and His-680.

It belongs to the class-II aminoacyl-tRNA synthetase family. Zn(2+) is required as a cofactor.

It is found in the cytoplasm. It carries out the reaction tRNA(Ala) + L-alanine + ATP = L-alanyl-tRNA(Ala) + AMP + diphosphate. Its function is as follows. Catalyzes the attachment of alanine to tRNA(Ala) in a two-step reaction: alanine is first activated by ATP to form Ala-AMP and then transferred to the acceptor end of tRNA(Ala). Also edits incorrectly charged Ser-tRNA(Ala) and Gly-tRNA(Ala) via its editing domain. This Bartonella bacilliformis protein is Alanine--tRNA ligase.